Consider the following 342-residue polypeptide: D-erythrose-4-phosphate dehydrogenase (342 aa).

12–13 contacts NAD(+); that stretch reads RI. Residues 154-156, Arg-200, 213-214, and Arg-236 each bind substrate; these read SCT and TK. The active-site Nucleophile is the Cys-155. Residue Asn-318 coordinates NAD(+).

Belongs to the glyceraldehyde-3-phosphate dehydrogenase family. Epd subfamily. Homotetramer.

The protein resides in the cytoplasm. It catalyses the reaction D-erythrose 4-phosphate + NAD(+) + H2O = 4-phospho-D-erythronate + NADH + 2 H(+). It participates in cofactor biosynthesis; pyridoxine 5'-phosphate biosynthesis; pyridoxine 5'-phosphate from D-erythrose 4-phosphate: step 1/5. Its function is as follows. Catalyzes the NAD-dependent conversion of D-erythrose 4-phosphate to 4-phosphoerythronate. In Klebsiella pneumoniae subsp. pneumoniae (strain ATCC 700721 / MGH 78578), this protein is D-erythrose-4-phosphate dehydrogenase.